Consider the following 333-residue polypeptide: Nucleoid-associated protein APL_0429 (333 aa).

The protein belongs to the YejK family.

It localises to the cytoplasm. Its subcellular location is the nucleoid. This Actinobacillus pleuropneumoniae serotype 5b (strain L20) protein is Nucleoid-associated protein APL_0429.